A 252-amino-acid chain; its full sequence is Cell division protein ZapD (252 aa).

Belongs to the ZapD family. As to quaternary structure, interacts with FtsZ.

It localises to the cytoplasm. Cell division factor that enhances FtsZ-ring assembly. Directly interacts with FtsZ and promotes bundling of FtsZ protofilaments, with a reduction in FtsZ GTPase activity. In Ralstonia pickettii (strain 12J), this protein is Cell division protein ZapD.